Reading from the N-terminus, the 441-residue chain is MTHDNIDILVVDDDISHCTILQALLRGWGYNVALANSGRQALEQVRERVFDLVLCDVRMAEMDGIATLKEIKALNPAIPVLIMTAYSSVETAVEALKTGALDYLIKPLDFDNLQATLEKALAHTHIIDAETPAVTASQFGMVGKSPAMQHLLSEIALVAPSEATVLIHGDSGTGKELVARAIHASSARSEKPLVTLNCAALNESLLESELFGHEKGAFTGADKRREGRFVEADGGTLFLDEIGDISPMMLVRLLRAIQEREVQRVGSNQTISVDVRLIAATHRDLAAEVNAGRFRQDLYYRLNVVAIEVPSLRQRREDIPLLAGHFLQRFAERNRKAVKGFTPQAMDLLIHYDWPGNIRELENAVERAVVLLTGEYISERELPLAIASTPIPLAQSLDIQPLVEVEKEVILAALEKTGGNKTEAARQLGITRKTLLAKLSR.

Residues 7–121 (DILVVDDDIS…NLQATLEKAL (115 aa)) enclose the Response regulatory domain. At aspartate 56 the chain carries 4-aspartylphosphate. Positions 141-370 (MVGKSPAMQH…LENAVERAVV (230 aa)) constitute a Sigma-54 factor interaction domain. Positions 172, 173, 329, and 359 each coordinate ATP. The segment at residues 421 to 440 (KTEAARQLGITRKTLLAKLS) is a DNA-binding region (H-T-H motif).

Post-translationally, phosphorylated by ZraS.

The protein localises to the cytoplasm. With respect to regulation, activity of the ZraS/ZraR two-component system is repressed by the zinc-bound form of ZraP, which probably interacts with the periplasmic region of ZraS. Part of the Zra signaling pathway, an envelope stress response (ESR) system composed of the periplasmic accessory protein ZraP, the histidine kinase ZraS and the transcriptional regulator ZraR. The ZraPSR system contributes to antibiotic resistance and is important for membrane integrity in the presence of membrane-targeting biocides. ZraR is a member of the two-component regulatory system ZraS/ZraR. When activated by ZraS, acts in conjunction with sigma-54 to regulate the expression of zraP in the presence of high Zn(2+) or Pb(2+) concentrations. Also positively autoregulates the expression of the zraSR operon. This is Transcriptional regulatory protein ZraR (zraR) from Escherichia coli O157:H7.